Here is a 448-residue protein sequence, read N- to C-terminus: UDP-N-acetylmuramoylalanine--D-glutamate ligase (448 aa).

The UDP-N-acetyl-alpha-D-muramoyl-L-alanine site is built by lysine 17, serine 18, threonine 38, arginine 39, and glycine 78. 116 to 122 (GSNAKST) serves as a coordination point for ATP. ADP contacts are provided by alanine 119, lysine 120, serine 121, and threonine 122. 2 residues coordinate UDP-N-acetyl-alpha-D-muramoyl-L-alanine: asparagine 143 and histidine 188. Asparagine 278, arginine 309, aspartate 324, and lysine 326 together coordinate ADP.

Belongs to the MurCDEF family.

The protein resides in the cytoplasm. The catalysed reaction is UDP-N-acetyl-alpha-D-muramoyl-L-alanine + D-glutamate + ATP = UDP-N-acetyl-alpha-D-muramoyl-L-alanyl-D-glutamate + ADP + phosphate + H(+). The protein operates within cell wall biogenesis; peptidoglycan biosynthesis. Its function is as follows. Involved in cell wall formation. Catalyzes the addition of D-glutamate to the peptidoglycan precursor UDP-N-acetylmuramoyl-L-alanine (UMA). This chain is UDP-N-acetylmuramoylalanine--D-glutamate ligase, found in Pseudomonas aeruginosa (strain ATCC 15692 / DSM 22644 / CIP 104116 / JCM 14847 / LMG 12228 / 1C / PRS 101 / PAO1).